The primary structure comprises 98 residues: uncharacterized protein (98 aa).

This is an uncharacterized protein from Ureaplasma parvum serovar 3 (strain ATCC 700970).